The following is a 154-amino-acid chain: Minor structural pilin EpdC (154 aa).

A propeptide spanning residues 1–13 (MIKMLQLPFNKKG) is cleaved from the precursor. The QXSXEXXXL motif lies at 14 to 24 (QVSFDFIIAML).

In terms of processing, the N-terminus is cleaved by the prepilin peptidase EppA, which recognizes the class III signal sequence.

It is found in the secreted. Its subcellular location is the cell surface. The protein localises to the fimbrium. Functionally, minor component of the type IV-like pili. Essential for pili formation. In Methanococcus maripaludis (strain DSM 14266 / JCM 13030 / NBRC 101832 / S2 / LL), this protein is Minor structural pilin EpdC.